Consider the following 261-residue polypeptide: Phosphatidylglycerol--prolipoprotein diacylglyceryl transferase (261 aa).

Transmembrane regions (helical) follow at residues 17 to 37 (FAIH…LLLG), 59 to 79 (LLFA…TLFY), 94 to 114 (IWEG…ALLW), and 121 to 141 (TSFF…LAFG). Arg142 provides a ligand contact to a 1,2-diacyl-sn-glycero-3-phospho-(1'-sn-glycerol). 2 helical membrane-spanning segments follow: residues 174–194 (PSQI…LWIY) and 228–248 (FLGL…PMII).

Belongs to the Lgt family.

It localises to the cell inner membrane. The catalysed reaction is L-cysteinyl-[prolipoprotein] + a 1,2-diacyl-sn-glycero-3-phospho-(1'-sn-glycerol) = an S-1,2-diacyl-sn-glyceryl-L-cysteinyl-[prolipoprotein] + sn-glycerol 1-phosphate + H(+). Its pathway is protein modification; lipoprotein biosynthesis (diacylglyceryl transfer). Functionally, catalyzes the transfer of the diacylglyceryl group from phosphatidylglycerol to the sulfhydryl group of the N-terminal cysteine of a prolipoprotein, the first step in the formation of mature lipoproteins. This is Phosphatidylglycerol--prolipoprotein diacylglyceryl transferase from Polynucleobacter asymbioticus (strain DSM 18221 / CIP 109841 / QLW-P1DMWA-1) (Polynucleobacter necessarius subsp. asymbioticus).